Here is a 498-residue protein sequence, read N- to C-terminus: MGQIVTMFEALPHIIDEVINIVIIVLIIITSIKAVYNFATCGILALVSFLFLAGRSCGMYGLNGPDIYKGVYQFKSVEFDMSHLNLTMPNACSVNNSHHYISMGSSGLEPTFTNDSILNHNFCNLTSALNKKSFDHTLMSIVSSLHLSIRGNSNYKAVSCDFNNGITIQYNLSSSDPQSAMSQCRTFRGRVLDMFRTAFGGKYMRSGWGWTGSDGKTTWCSQTSYQYLIIQNRTWENHCRYAGPFGMSRILFAQEKTKFLTRRLSGTFTWTLSDSSGVENPGGYCLTKWMILAAELKCFGNTAVAKCNVNHDEEFCDMLRLIDYNKAALSKFKQDVESALHVFKTTLNSLISDQLLMRNHLRDLMGVPYCNYSKFWYLEHAKTGETSVPKCWLVTNGSYLNETHFSDQIEQEADNMITEMLRKDYIKRQGSTPLALMDLLMFSTSAYLISIFLHFVRIPTHRHIKGGSCPKPHRLTNKGICSCGAFKVPGVKTIWKRR.

The N-myristoyl glycine; by host moiety is linked to residue Gly2. Over 2 to 17 (GQIVTMFEALPHIIDE) the chain is Extracellular. A helical transmembrane segment spans residues 18-33 (VINIVIIVLIIITSIK). Residues 34–58 (AVYNFATCGILALVSFLFLAGRSCG) are Cytoplasmic-facing. Cys57 serves as a coordination point for Zn(2+). The Extracellular portion of the chain corresponds to 59 to 438 (MYGLNGPDIY…QGSTPLALMD (380 aa)). Asn85, Asn95, Asn114, Asn124, and Asn171 each carry an N-linked (GlcNAc...) asparagine; by host glycan. Cystine bridges form between Cys92–Cys239, Cys123–Cys160, Cys184–Cys220, Cys285–Cys298, Cys307–Cys316, and Cys370–Cys391. N-linked (GlcNAc...) asparagine; by host glycosylation is present at Asn232. 3 N-linked (GlcNAc...) asparagine; by host glycosylation sites follow: Asn371, Asn396, and Asn401. A helical membrane pass occupies residues 439 to 459 (LLMFSTSAYLISIFLHFVRIP). Residues 460–498 (THRHIKGGSCPKPHRLTNKGICSCGAFKVPGVKTIWKRR) are Cytoplasmic-facing. 6 residues coordinate Zn(2+): His461, His463, Cys469, His473, Cys481, and Cys483.

The protein belongs to the arenaviridae GPC protein family. As to quaternary structure, interacts with glycoprotein G2. Part of the GP complex (GP-C) together with glycoprotein G1 and glycoprotein G2. The GP-complex interacts with protein Z, which interacts with ribonucleocapsid; these interactions may induce virion budding. Homotrimer; disulfide-linked. In pre-fusion state, G1 homotrimers bind G2 homotrimers via ionic interactions. Part of the GP complex (GP-C) together with glycoprotein G2 and the stable signal peptide. Interacts with the primary host receptor DAG1 on the cell surface. The GP-complex interacts with protein Z, which interacts with ribonucleocapsid; these interactions may induce virion budding. In terms of assembly, homotrimer. Interacts with the stable signal peptide. In pre-fusion state, G2 homotrimers bind G1 homotrimers via ionic interactions. Part of the GP complex (GP-C) together with glycoprotein G1 and the stable signal peptide. Acidification in the endosome triggers rearrangements, which ultimately leads to a 6 helix bundle formed by the two heptad repeat domains (HR1 and HR2) in post-fusion state. The GP-complex interacts with protein Z, which interacts with ribonucleocapsid; these interactions may induce virion budding. Specific enzymatic cleavages in vivo yield mature proteins. GP-C polyprotein is cleaved in the endoplasmic reticulum by the host protease MBTPS1. Only cleaved glycoprotein is incorporated into virions. Post-translationally, the SSP remains stably associated with the GP complex following cleavage by signal peptidase and plays crucial roles in the trafficking of GP through the secretory pathway. In terms of processing, myristoylation is necessary for GP2-mediated fusion activity.

It is found in the virion membrane. Its subcellular location is the host endoplasmic reticulum membrane. It localises to the host Golgi apparatus membrane. The protein resides in the host cell membrane. Functionally, functions as a cleaved signal peptide that is retained as the third component of the GP complex (GP-C). Helps to stabilize the spike complex in its native conformation. The SSP is required for efficient glycoprotein expression, post-translational maturation cleavage of G1 and G2, glycoprotein transport to the cell surface plasma membrane, formation of infectious virus particles, and acid pH-dependent glycoprotein-mediated cell fusion. Its function is as follows. Forms the virion spikes together with glycoprotein G2. The glycoprotein spike trimers are connected to the underlying matrix. Interacts with the host receptor. Mediates virus attachment to the host primary receptor alpha-dystroglycan DAG1 (alpha-DG) at the cell surface. Down-modulates host DAG1. In terms of biological role, forms the virion spikes together with glycoprotein G1. The glycoprotein spike trimers are connected to the underlying matrix. Class I viral fusion protein that directs fusion of viral and host endosomal membranes, leading to delivery of the nucleocapsid into the cytoplasm. Membrane fusion is mediated by irreversible conformational changes induced by acidification. This Homo sapiens (Human) protein is Pre-glycoprotein polyprotein GP complex.